The primary structure comprises 152 residues: UPF0225 protein YchJ (152 aa).

This sequence belongs to the UPF0225 family.

This Shigella boydii serotype 18 (strain CDC 3083-94 / BS512) protein is UPF0225 protein YchJ.